The primary structure comprises 150 residues: Glycophorin-A (150 aa).

The signal sequence occupies residues 1-19 (MYGKIIFVLLLSEIVSISA). Residues 20 to 91 (LSTTEVAMHT…QLAHHFSEPE (72 aa)) are Extracellular-facing. Residue serine 21 is glycosylated (O-linked (GalNAc...) serine). 3 O-linked (GalNAc...) threonine glycosylation sites follow: threonine 22, threonine 23, and threonine 29. O-linked (GalNAc...) serine glycosylation is present at serine 30. O-linked (GalNAc...) threonine glycosylation occurs at threonine 31. Serine 32 carries O-linked (GalNAc...) serine glycosylation. Threonine 36 carries an O-linked (GalNAc...) threonine glycan. Residues serine 38 and serine 41 are each glycosylated (O-linked (GalNAc...) serine). Threonine 44 carries O-linked (GalNAc...) threonine glycosylation. The N-linked (GlcNAc...) asparagine glycan is linked to asparagine 45. 2 O-linked (GalNAc...) threonine glycosylation sites follow: threonine 52 and threonine 56. Residues serine 63 and serine 66 are each glycosylated (O-linked (GalNAc...) serine). An O-linked (GalNAc...) threonine glycan is attached at threonine 69. Residues 92-114 (ITLIIFGVMAGVIGTILLISYGI) traverse the membrane as a helical segment. Over 115–150 (RRLIKKSPSDVKPLPSPDTDVPLSSVEIENPETSDQ) the chain is Cytoplasmic. Positions 121-150 (SPSDVKPLPSPDTDVPLSSVEIENPETSDQ) are disordered. A Phosphothreonine modification is found at threonine 133. Phosphoserine occurs at positions 138 and 148.

This sequence belongs to the glycophorin A family. Homodimer. Component of the ankyrin-1 complex in the erythrocyte, composed of ANK1, RHCE, RHAG, SLC4A1, EPB42, GYPA, GYPB and AQP1. Interacts with SLC4A1; a GYPA monomer is bound at each end of the SLC4A1 dimer forming a heterotetramer. As to quaternary structure, (Microbial infection) Interacts with Streptococcus gordonii hsa protein. In terms of assembly, (Microbial infection) Interacts (in a sialic acid-independent manner) with P.falciparum MSP1 subunit p83. In terms of processing, the major O-linked glycan are NeuAc-alpha-(2-3)-Gal-beta-(1-3)-[NeuAc-alpha-(2-6)]-GalNAcOH (about 78 %) and NeuAc-alpha-(2-3)-Gal-beta-(1-3)-GalNAcOH (17 %). Minor O-glycans (5 %) include NeuAc-alpha-(2-3)-Gal-beta-(1-3)-[NeuAc-alpha-(2-6)]-GalNAcOH NeuAc-alpha-(2-8)-NeuAc-alpha-(2-3)-Gal-beta-(1-3)-GalNAcOH. About 1% of all O-linked glycans carry blood group A, B and H determinants. They derive from a type-2 precursor core structure, Gal-beta-(1,3)-GlcNAc-beta-1-R, and the antigens are synthesized by addition of fucose (H antigen-specific) and then N-acetylgalactosamine (A antigen-specific) or galactose (B antigen-specific). Specifically O-linked-glycans are NeuAc-alpha-(2-3)-Gal-beta-(1-3)-GalNAcOH-(6-1)-GlcNAc-beta-(4-1)-[Fuc-alpha-(1-2)]-Gal-beta-(3-1)-GalNAc-alpha (about 1%, B antigen-specific) and NeuAc-alpha-(2-3)-Gal-beta-(1-3)-GalNAcOH-(6-1)-GlcNAc-beta-(4-1)-[Fuc-alpha-(1-2)]-Gal-beta (1 %, O antigen-, A antigen- and B antigen-specific).

Its subcellular location is the cell membrane. Component of the ankyrin-1 complex, a multiprotein complex involved in the stability and shape of the erythrocyte membrane. Glycophorin A is the major intrinsic membrane protein of the erythrocyte. The N-terminal glycosylated segment, which lies outside the erythrocyte membrane, has MN blood group receptors. Appears to be important for the function of SLC4A1 and is required for high activity of SLC4A1. May be involved in translocation of SLC4A1 to the plasma membrane. Functionally, (Microbial infection) Appears to be a receptor for Hepatitis A virus (HAV). Its function is as follows. (Microbial infection) Receptor for P.falciparum erythrocyte-binding antigen 175 (EBA-175); binding of EBA-175 is dependent on sialic acid residues of the O-linked glycans. The chain is Glycophorin-A from Homo sapiens (Human).